Consider the following 228-residue polypeptide: Ribosomal RNA small subunit methyltransferase G (228 aa).

Residues glycine 89, leucine 94, 140-141 (VE), and arginine 159 contribute to the S-adenosyl-L-methionine site.

Belongs to the methyltransferase superfamily. RNA methyltransferase RsmG family.

The protein localises to the cytoplasm. The enzyme catalyses guanosine(527) in 16S rRNA + S-adenosyl-L-methionine = N(7)-methylguanosine(527) in 16S rRNA + S-adenosyl-L-homocysteine. Its function is as follows. Specifically methylates the N7 position of guanine in position 527 of 16S rRNA. In Burkholderia lata (strain ATCC 17760 / DSM 23089 / LMG 22485 / NCIMB 9086 / R18194 / 383), this protein is Ribosomal RNA small subunit methyltransferase G.